A 552-amino-acid chain; its full sequence is Formate--tetrahydrofolate ligase (552 aa).

Residue 62 to 69 (TPAGEGKS) coordinates ATP.

The protein belongs to the formate--tetrahydrofolate ligase family.

It catalyses the reaction (6S)-5,6,7,8-tetrahydrofolate + formate + ATP = (6R)-10-formyltetrahydrofolate + ADP + phosphate. It functions in the pathway one-carbon metabolism; tetrahydrofolate interconversion. This chain is Formate--tetrahydrofolate ligase, found in Ligilactobacillus salivarius (strain UCC118) (Lactobacillus salivarius).